The chain runs to 385 residues: Meiotic recombination protein SPO11-2 (385 aa).

Positions 24 to 169 constitute a Topo IIA-type catalytic domain; that stretch reads LPPAEVRARI…LGIMASSRGA (146 aa). Catalysis depends on Tyr126, which acts as the O-(5'-phospho-DNA)-tyrosine intermediate. Mg(2+)-binding residues include Glu219 and Asp272.

It belongs to the TOP6A family. As to quaternary structure, interacts with TOP6B. It depends on Mg(2+) as a cofactor.

The protein localises to the nucleus. The enzyme catalyses ATP-dependent breakage, passage and rejoining of double-stranded DNA.. Required for meiotic recombination. Mediates DNA cleavage that forms the double-strand breaks (DSB) that initiate meiotic recombination. This Oryza sativa subsp. japonica (Rice) protein is Meiotic recombination protein SPO11-2 (SPO11-2).